Here is a 386-residue protein sequence, read N- to C-terminus: Cytochrome b (386 aa).

4 consecutive transmembrane segments (helical) span residues 32–52, 76–98, 113–133, and 179–199; these read LGSL…FLAM, YLIR…AHIG, VWVI…LGYC, and FFAL…MHLM. Residues His82 and His96 each coordinate heme b. The heme b site is built by His183 and His197. A ubiquinone is bound at residue His202. 4 consecutive transmembrane segments (helical) span residues 225-245, 289-309, 321-341, and 348-368; these read FVFK…LFVF, LGGV…PVTD, ISKT…QLGQ, and FIQL…FIVP.

This sequence belongs to the cytochrome b family. Fungal cytochrome b-c1 complex contains 10 subunits; 3 respiratory subunits, 2 core proteins and 5 low-molecular weight proteins. Cytochrome b-c1 complex is a homodimer. Heme b serves as cofactor.

The protein localises to the mitochondrion inner membrane. In terms of biological role, component of the ubiquinol-cytochrome c reductase complex (complex III or cytochrome b-c1 complex) that is part of the mitochondrial respiratory chain. The b-c1 complex mediates electron transfer from ubiquinol to cytochrome c. Contributes to the generation of a proton gradient across the mitochondrial membrane that is then used for ATP synthesis. The protein is Cytochrome b (COB) of Wickerhamomyces canadensis (Yeast).